A 215-amino-acid chain; its full sequence is Putative B3 domain-containing protein Os11g0625400 (215 aa).

Residues 1–51 (MTVELEKIAGSFFISKGWKTFVHRTGLLSGQYIRFQVLTPSKINVLLFDKK) constitute a DNA-binding region (TF-B3 1). A disordered region spans residues 92 to 117 (SHTSNKETSSDSRTESMTDIPSSSDN). Positions 95-107 (SNKETSSDSRTES) are enriched in basic and acidic residues. Polar residues predominate over residues 108 to 117 (MTDIPSSSDN). The segment at residues 123–215 (DIKNYISIIG…PNVKITIDVL (93 aa)) is a DNA-binding region (TF-B3 2).

It localises to the nucleus. The protein is Putative B3 domain-containing protein Os11g0625400 of Oryza sativa subsp. japonica (Rice).